The chain runs to 451 residues: Chromosomal replication initiator protein DnaA 2 (451 aa).

A domain I, interacts with DnaA modulators region spans residues 1-68; it reads MQAWEEFLKA…QQKFINGNNK (68 aa). Residues 68 to 104 are domain II; that stretch reads KRIKIHLSVANTPQRAKKTKTANKEKDFKAPFELTFD. The interval 105-326 is domain III, AAA+ region; the sequence is ELDPLCLFPY…KGLEALVLRL (222 aa). ATP contacts are provided by glycine 156, glycine 158, lysine 159, and threonine 160. The domain IV, binds dsDNA stretch occupies residues 327 to 451; the sequence is HLDAKHSITA…CHIILKKLQG (125 aa).

The protein belongs to the DnaA family. In terms of assembly, oligomerizes as a right-handed, spiral filament on DNA at oriC.

It is found in the cytoplasm. Plays an essential role in the initiation and regulation of chromosomal replication. ATP-DnaA binds to the origin of replication (oriC) to initiate formation of the DNA replication initiation complex once per cell cycle. Binds the DnaA box (a 9 base pair repeat at the origin) and separates the double-stranded (ds)DNA. Forms a right-handed helical filament on oriC DNA; dsDNA binds to the exterior of the filament while single-stranded (ss)DNA is stabiized in the filament's interior. The ATP-DnaA-oriC complex binds and stabilizes one strand of the AT-rich DNA unwinding element (DUE), permitting loading of DNA polymerase. After initiation quickly degrades to an ADP-DnaA complex that is not apt for DNA replication. Binds acidic phospholipids. The protein is Chromosomal replication initiator protein DnaA 2 of Protochlamydia amoebophila (strain UWE25).